We begin with the raw amino-acid sequence, 746 residues long: Methyl-CpG-binding domain-containing protein 13 (746 aa).

Short sequence motifs (nuclear localization signal) lie at residues 13–20 (ERKVEIRV) and 44–51 (IKKLEITN). An MBD domain is found at 29 to 104 (VIVEKSAAQG…KESDIEDDDS (76 aa)). Disordered regions lie at residues 131 to 157 (IDDV…MTSD), 169 to 283 (LGKK…PTPE), 295 to 328 (PLDD…KTRT), 348 to 479 (TKVQ…LKSP), 518 to 562 (TAAG…SGSA), and 696 to 746 (EPDT…FSKD). The span at 169–180 (LGKKEEVKDPIE) shows a compositional bias: basic and acidic residues. Positions 190-199 (RSQTKASTTE) are enriched in polar residues. The segment covering 244 to 260 (SSEKRITRSKVEEKKNE) has biased composition (basic and acidic residues). A Nuclear localization signal motif is present at residues 256–263 (EKKNELSN). The span at 427 to 451 (VAQSCNEQSSQKPHAAAATSNNRVS) shows a compositional bias: polar residues. Over residues 465 to 476 (VGRKPSKDKKTL) the composition is skewed to basic residues. Composition is skewed to polar residues over residues 529–546 (PKAN…SPLR) and 702–730 (KSQG…TNKT). The segment covering 732–746 (GKPDDLRFTQSFSKD) has biased composition (basic and acidic residues).

It is found in the nucleus. Probable transcriptional regulator. This Arabidopsis thaliana (Mouse-ear cress) protein is Methyl-CpG-binding domain-containing protein 13 (MBD13).